An 845-amino-acid polypeptide reads, in one-letter code: Proto-oncogene vav (845 aa).

The Calponin-homology (CH) domain maps to Met-1–Pro-119. The 180-residue stretch at Lys-194–Val-373 folds into the DH domain. Residues Arg-402 to Ser-504 form the PH domain. A Phorbol-ester/DAG-type zinc finger spans residues Gly-515 to Cys-564. Residues Leu-592–His-660 form the SH3 1 domain. The region spanning Trp-671–Phe-765 is the SH2 domain. The region spanning Lys-782–Ser-842 is the SH3 2 domain. Phosphotyrosine occurs at positions 826 and 844.

Interacts with SHB. Interacts with SH2B2, GRB2, GRB3, DOCK2, SLA, TEC and ZNF655/VIK. Interacts with SIAH2; without leading to its degradation. Associates with BLNK, PLCG1, GRB2 and NCK1 in a B-cell antigen receptor-dependent fashion. Interacts with CBLB; which inhibits tyrosine phosphorylation and down-regulates activity. May interact with CCPG1. Interacts with CLNK. Interacts with THEMIS2. Interacts with NEK3 and this interaction is prolactin-dependent. Interacts with ITK. Interacts with PTK2B/PYK2. Interacts with HCK. Interacts with PTK2B/PYK2. Interacts (via SH2 domain) with SYK. Interacts with ANKRD54. Interacts with CD6. Interacts with isoform 2 of CRACR2A. Interacts with LCP2; this interaction plays a role in TCR-mediated cytokine production. Post-translationally, phosphorylated on tyrosine residues by HCK in response to IFNG and bacterial lipopolysaccharide (LPS). Phosphorylated by FYN. Widely expressed in hematopoietic cells but not in other cell types.

Couples tyrosine kinase signals with the activation of the Rho/Rac GTPases, thus leading to cell differentiation and/or proliferation. The protein is Proto-oncogene vav (VAV1) of Homo sapiens (Human).